We begin with the raw amino-acid sequence, 447 residues long: Tubulin beta-2 chain (447 aa).

8 residues coordinate GTP: glutamine 9, glutamate 67, serine 136, glycine 140, threonine 141, glycine 142, asparagine 202, and asparagine 224. Mg(2+) is bound at residue glutamate 67. The span at 411–425 (SNMNDLVSEYQQYQD) shows a compositional bias: polar residues. The interval 411-447 (SNMNDLVSEYQQYQDATAEEDEYEEEEEDYHQEHDEM) is disordered. The segment covering 427-440 (TAEEDEYEEEEEDY) has biased composition (acidic residues).

It belongs to the tubulin family. As to quaternary structure, dimer of alpha and beta chains. A typical microtubule is a hollow water-filled tube with an outer diameter of 25 nm and an inner diameter of 15 nM. Alpha-beta heterodimers associate head-to-tail to form protofilaments running lengthwise along the microtubule wall with the beta-tubulin subunit facing the microtubule plus end conferring a structural polarity. Microtubules usually have 13 protofilaments but different protofilament numbers can be found in some organisms and specialized cells. Mg(2+) is required as a cofactor.

The protein localises to the cytoplasm. It is found in the cytoskeleton. In terms of biological role, tubulin is the major constituent of microtubules, a cylinder consisting of laterally associated linear protofilaments composed of alpha- and beta-tubulin heterodimers. Microtubules grow by the addition of GTP-tubulin dimers to the microtubule end, where a stabilizing cap forms. Below the cap, tubulin dimers are in GDP-bound state, owing to GTPase activity of alpha-tubulin. The polypeptide is Tubulin beta-2 chain (TUBB2) (Pisum sativum (Garden pea)).